The primary structure comprises 472 residues: Pentatricopeptide repeat-containing protein At3g18970 (472 aa).

8 PPR repeats span residues 107–139, 146–180, 181–216, 219–253, 256–286, 287–321, 322–352, and 358–388; these read NERTFVFVLGACARSASSSALRVGRIVHGMVKK, SELIGTTLLHFYAKNGDLRYARKVFDEMPERTSVT, WNAMIGGYCSHKDKGNHNARKAMVLFRRFSCCGSGV, TDTTMVCVLSAISQTGLLEIGSLVHGYIEKLGFTP, DVFIGTALVDMYSKCGCLNNAFSVFELMKVK, NVFTWTSMATGLALNGRGNETPNLLNRMAESGIKP, NEITFTSLLSAYRHIGLVEEGIELFKSMKTR, and VIEHYGCIVDLLGKAGRIQEAYQFILAMPIK. The tract at residues 393–472 is type E motif; degenerate; the sequence is LLRSLCNACS…IKTRPGYSFV (80 aa).

The protein belongs to the PPR family. PCMP-E subfamily.

The chain is Pentatricopeptide repeat-containing protein At3g18970 (PCMP-E93) from Arabidopsis thaliana (Mouse-ear cress).